The chain runs to 194 residues: DNA replication complex GINS protein PSF3 (194 aa).

This sequence belongs to the GINS3/PSF3 family. As to quaternary structure, component of the GINS complex which is a heterotetramer of SLD5, PSF1, PSF2 and PSF3.

Its subcellular location is the nucleus. Functions as part of the GINS complex which plays an essential role in the initiation of DNA replication by binding to DNA replication origins and facilitating the assembly of the DNA replication machinery. This chain is DNA replication complex GINS protein PSF3, found in Saccharomyces cerevisiae (strain ATCC 204508 / S288c) (Baker's yeast).